A 141-amino-acid polypeptide reads, in one-letter code: Large ribosomal subunit protein uL11 (141 aa).

The protein belongs to the universal ribosomal protein uL11 family. As to quaternary structure, part of the ribosomal stalk of the 50S ribosomal subunit. Interacts with L10 and the large rRNA to form the base of the stalk. L10 forms an elongated spine to which L12 dimers bind in a sequential fashion forming a multimeric L10(L12)X complex. In terms of processing, one or more lysine residues are methylated.

Functionally, forms part of the ribosomal stalk which helps the ribosome interact with GTP-bound translation factors. The protein is Large ribosomal subunit protein uL11 of Synechocystis sp. (strain ATCC 27184 / PCC 6803 / Kazusa).